Here is a 92-residue protein sequence, read N- to C-terminus: UPF0223 protein SGO_1052 (92 aa).

The protein belongs to the UPF0223 family.

The polypeptide is UPF0223 protein SGO_1052 (Streptococcus gordonii (strain Challis / ATCC 35105 / BCRC 15272 / CH1 / DL1 / V288)).